The sequence spans 441 residues: Glutamyl-tRNA reductase (441 aa).

Substrate-binding positions include 49–52 (TCNR), Ser-109, 114–116 (EGQ), and Gln-120. Cys-50 serves as the catalytic Nucleophile. 198 to 203 (GAGRMS) contributes to the NADP(+) binding site.

This sequence belongs to the glutamyl-tRNA reductase family. In terms of assembly, homodimer.

The enzyme catalyses (S)-4-amino-5-oxopentanoate + tRNA(Glu) + NADP(+) = L-glutamyl-tRNA(Glu) + NADPH + H(+). It participates in porphyrin-containing compound metabolism; protoporphyrin-IX biosynthesis; 5-aminolevulinate from L-glutamyl-tRNA(Glu): step 1/2. Its pathway is porphyrin-containing compound metabolism; chlorophyll biosynthesis. In terms of biological role, catalyzes the NADPH-dependent reduction of glutamyl-tRNA(Glu) to glutamate 1-semialdehyde (GSA). The protein is Glutamyl-tRNA reductase of Prochlorococcus marinus (strain NATL1A).